A 446-amino-acid chain; its full sequence is MSERKYFGTDGVRGRVGQFPITPEFAVKLGWAAGRVLAAKGTSRVLVGKDTRVSGYMLESALEAGLAAAGVGVDFLGPMPTPGIAYLTRTFRAAAGIVISASHNPYYDNGIKFFADNGHKLPDAVELEIERLLDEPMDCVISEELGRAKRINDAAGRYIEFCKSVFPNEMTLEGLHIVVDCAHGATYHIAPNVLRELGAEVTEIGTQPNGLNINKECGATHLTALQNKVLETKADLGIALDGDGDRIMMVTENGRPIDGDEILYMLAVTAQNQGQLQGGVVGTLMTNFALEKELDKRRIPFVRAKVGDRYVIEELVKRDWYLGGENSGHVINRQHHTTGDGIIAGLQVLAAMYQEQKSLEKLSCDFHKLPQVLINVRFESDKQPLESENVKSVVREVESALAGTGRVLLRKSGTEPLIRVMVEGENEAKVKAFAQQIANEVEAATN.

The active-site Phosphoserine intermediate is the Ser102. Mg(2+) is bound by residues Ser102, Asp241, Asp243, and Asp245. A Phosphoserine modification is found at Ser102.

This sequence belongs to the phosphohexose mutase family. It depends on Mg(2+) as a cofactor. Activated by phosphorylation.

The enzyme catalyses alpha-D-glucosamine 1-phosphate = D-glucosamine 6-phosphate. Its function is as follows. Catalyzes the conversion of glucosamine-6-phosphate to glucosamine-1-phosphate. The sequence is that of Phosphoglucosamine mutase from Idiomarina loihiensis (strain ATCC BAA-735 / DSM 15497 / L2-TR).